A 561-amino-acid polypeptide reads, in one-letter code: Urocanate hydratase (561 aa).

NAD(+) is bound by residues 52 to 53 (GG), Gln130, 176 to 178 (GMG), Glu196, Arg201, 242 to 243 (NA), 263 to 267 (QTSAH), 273 to 274 (YL), and Tyr322. Residue Cys410 is part of the active site. An NAD(+)-binding site is contributed by Gly492.

This sequence belongs to the urocanase family. NAD(+) is required as a cofactor.

It localises to the cytoplasm. It carries out the reaction 4-imidazolone-5-propanoate = trans-urocanate + H2O. Its pathway is amino-acid degradation; L-histidine degradation into L-glutamate; N-formimidoyl-L-glutamate from L-histidine: step 2/3. Its function is as follows. Catalyzes the conversion of urocanate to 4-imidazolone-5-propionate. The chain is Urocanate hydratase from Citrobacter koseri (strain ATCC BAA-895 / CDC 4225-83 / SGSC4696).